Here is a 74-residue protein sequence, read N- to C-terminus: Small integral membrane protein 15 (74 aa).

The chain crosses the membrane as a helical span at residues 20–40; sequence YGFLTTVILVLTPLFIISAAL. The stretch at 48 to 74 forms a coiled coil; it reads IETREREQKKKRKRQENIVKAKRAKKD. The segment at 53–74 is disordered; it reads REQKKKRKRQENIVKAKRAKKD. Basic residues predominate over residues 56–74; that stretch reads KKKRKRQENIVKAKRAKKD.

This sequence belongs to the SMIM15 family.

Its subcellular location is the membrane. The sequence is that of Small integral membrane protein 15 (SMIM15) from Gallus gallus (Chicken).